Reading from the N-terminus, the 975-residue chain is FHF complex subunit HOOK-interacting protein 1B (975 aa).

Residues 465–496 (APSPPRPEHASWARGPGSPSVDSSSVVTVPRP) are disordered. Residue serine 467 is modified to Phosphoserine. Residues 482-496 (SPSVDSSSVVTVPRP) show a composition bias toward low complexity. Serine 510, serine 523, serine 529, and serine 533 each carry phosphoserine. 3 disordered regions span residues 511-548 (LGGSESPGPVPRSPGLTASPTSSPSRRPSPAEEPGELE), 573-621 (SAPY…GLAV), and 690-717 (SNGGAGSEPPLEPPLPPEEEEAYESFTC). Residues 527–538 (TASPTSSPSRRP) show a composition bias toward low complexity. Residues 597–608 (LLPEEDRDNVRE) show a composition bias toward basic and acidic residues. Serine 863 carries the phosphoserine modification. The residue at position 892 (threonine 892) is a Phosphothreonine. Serine 900 is subject to Phosphoserine.

Belongs to the FHIP family. In terms of assembly, component of the FTS/Hook/FHIP complex (FHF complex), composed of AKTIP/FTS, FHIP1B, and one or more members of the Hook family of proteins HOOK1, HOOK2, and HOOK3. The FHF complex associates with the homotypic vesicular sorting complex (the HOPS complex).

Its function is as follows. Component of the FTS/Hook/FHIP complex (FHF complex). The FHF complex may function to promote vesicle trafficking and/or fusion via the homotypic vesicular protein sorting complex (the HOPS complex). FHF complex promotes the distribution of AP-4 complex to the perinuclear area of the cell. This Mus musculus (Mouse) protein is FHF complex subunit HOOK-interacting protein 1B.